Consider the following 702-residue polypeptide: Ribosomal RNA large subunit methyltransferase K/L (702 aa).

The THUMP domain occupies 43–154 (LVYQSLMWSR…KETASIALDL (112 aa)).

This sequence belongs to the methyltransferase superfamily. RlmKL family.

It localises to the cytoplasm. It carries out the reaction guanosine(2445) in 23S rRNA + S-adenosyl-L-methionine = N(2)-methylguanosine(2445) in 23S rRNA + S-adenosyl-L-homocysteine + H(+). The enzyme catalyses guanosine(2069) in 23S rRNA + S-adenosyl-L-methionine = N(2)-methylguanosine(2069) in 23S rRNA + S-adenosyl-L-homocysteine + H(+). Specifically methylates the guanine in position 2445 (m2G2445) and the guanine in position 2069 (m7G2069) of 23S rRNA. This is Ribosomal RNA large subunit methyltransferase K/L from Escherichia coli (strain K12 / DH10B).